Consider the following 289-residue polypeptide: Thiazole synthase (289 aa).

The Schiff-base intermediate with DXP role is filled by lysine 132. Residues glycine 193, 219 to 220, and 241 to 242 each bind 1-deoxy-D-xylulose 5-phosphate; these read AG and NT.

It belongs to the ThiG family. In terms of assembly, homotetramer. Forms heterodimers with either ThiH or ThiS.

Its subcellular location is the cytoplasm. It catalyses the reaction [ThiS sulfur-carrier protein]-C-terminal-Gly-aminoethanethioate + 2-iminoacetate + 1-deoxy-D-xylulose 5-phosphate = [ThiS sulfur-carrier protein]-C-terminal Gly-Gly + 2-[(2R,5Z)-2-carboxy-4-methylthiazol-5(2H)-ylidene]ethyl phosphate + 2 H2O + H(+). Its pathway is cofactor biosynthesis; thiamine diphosphate biosynthesis. In terms of biological role, catalyzes the rearrangement of 1-deoxy-D-xylulose 5-phosphate (DXP) to produce the thiazole phosphate moiety of thiamine. Sulfur is provided by the thiocarboxylate moiety of the carrier protein ThiS. In vitro, sulfur can be provided by H(2)S. This chain is Thiazole synthase, found in Rhodospirillum rubrum (strain ATCC 11170 / ATH 1.1.1 / DSM 467 / LMG 4362 / NCIMB 8255 / S1).